The following is a 768-amino-acid chain: Integrin beta-8 (768 aa).

An N-terminal signal peptide occupies residues 1 to 42 (MCGSALGLPPAAFVRLRSCRPGPAAFLRAAWVLSLVLGLGRS). At 43–683 (ENSRCASSHA…ECFSSPSYLR (641 aa)) the chain is on the extracellular side. The PSI domain maps to 46–95 (RCASSHAVSCSECLALGPDCGWCVHEDFISGGPRSERCDIVSNLISKGCP). Cystine bridges form between Cys47-Cys65, Cys55-Cys469, Cys58-Cys83, Cys68-Cys94, Cys211-Cys218, Cys266-Cys307, Cys407-Cys419, Cys439-Cys467, Cys471-Cys491, Cys471-Cys494, Cys481-Cys494, Cys499-Cys528, Cys511-Cys526, Cys520-Cys531, Cys533-Cys546, Cys553-Cys567, Cys561-Cys572, Cys574-Cys583, Cys585-Cys609, Cys593-Cys607, Cys601-Cys612, Cys614-Cys624, Cys627-Cys630, Cys634-Cys661, and Cys640-Cys657. Residues 146 to 384 (PVDLYYLVDV…NLVVEAYQKL (239 aa)) form the VWFA domain. Mg(2+) is bound by residues Asp154 and Ser156. Residue Asp193 coordinates Ca(2+). N-linked (GlcNAc...) asparagine glycosylation is present at Asn233. Positions 249, 251, 253, and 254 each coordinate Ca(2+). Glu254 serves as a coordination point for Mg(2+). N-linked (GlcNAc...) asparagine glycosylation is present at Asn402. Asn421, Asn431, and Asn456 each carry an N-linked (GlcNAc...) asparagine glycan. I-EGF domains lie at 471–495 (CEAS…PQCQ), 499–547 (CHQE…KYCE), 548–584 (KDDF…DRCQ), and 585–625 (CPSA…RFCE). An N-linked (GlcNAc...) asparagine glycan is attached at Asn648. A helical membrane pass occupies residues 684-703 (IFFIIFIVTFLIGLLKILII). Over 704–768 (RQVILQWNSS…NAHETFRCNF (65 aa)) the chain is Cytoplasmic.

Belongs to the integrin beta chain family. In terms of assembly, heterodimer of an alpha and a beta subunit. Beta-8 (ITGB8) associates with alpha-V (ITGAV) to form ITGAV:ITGB8. ITGAV:ITGB8 interacts with TGFB1. As to expression, placenta, kidney, brain, ovary, uterus and in several transformed cells.

It is found in the cell membrane. In terms of biological role, integrin alpha-V:beta-8 (ITGAV:ITGB8) is a receptor for fibronectin. It recognizes the sequence R-G-D in its ligands. Integrin alpha-V:beta-6 (ITGAV:ITGB6) mediates R-G-D-dependent release of transforming growth factor beta-1 (TGF-beta-1) from regulatory Latency-associated peptide (LAP), thereby playing a key role in TGF-beta-1 activation on the surface of activated regulatory T-cells (Tregs). Required during vasculogenesis. The protein is Integrin beta-8 (ITGB8) of Oryctolagus cuniculus (Rabbit).